We begin with the raw amino-acid sequence, 110 residues long: T cell receptor alpha variable 35 (110 aa).

A signal peptide spans 1-19 (MLLEHLLIILWMQLTWVSG). Residues 20–110 (QQLNQSPQSM…DVGIYFCAGQ (91 aa)) enclose the Ig-like domain. Residues Asn-40 and Asn-93 are each glycosylated (N-linked (GlcNAc...) asparagine). A disulfide bond links Cys-41 and Cys-107.

Alpha-beta TR is a heterodimer composed of an alpha and beta chain; disulfide-linked. The alpha-beta TR is associated with the transmembrane signaling CD3 coreceptor proteins to form the TR-CD3 (TcR or TCR). The assembly of alpha-beta TR heterodimers with CD3 occurs in the endoplasmic reticulum where a single alpha-beta TR heterodimer associates with one CD3D-CD3E heterodimer, one CD3G-CD3E heterodimer and one CD247 homodimer forming a stable octameric structure. CD3D-CD3E and CD3G-CD3E heterodimers preferentially associate with TR alpha and TR beta chains, respectively. The association of the CD247 homodimer is the last step of TcR assembly in the endoplasmic reticulum and is required for transport to the cell surface.

The protein localises to the cell membrane. V region of the variable domain of T cell receptor (TR) alpha chain that participates in the antigen recognition. Alpha-beta T cell receptors are antigen specific receptors which are essential to the immune response and are present on the cell surface of T lymphocytes. Recognize peptide-major histocompatibility (MH) (pMH) complexes that are displayed by antigen presenting cells (APC), a prerequisite for efficient T cell adaptive immunity against pathogens. Binding of alpha-beta TR to pMH complex initiates TR-CD3 clustering on the cell surface and intracellular activation of LCK that phosphorylates the ITAM motifs of CD3G, CD3D, CD3E and CD247 enabling the recruitment of ZAP70. In turn ZAP70 phosphorylates LAT, which recruits numerous signaling molecules to form the LAT signalosome. The LAT signalosome propagates signal branching to three major signaling pathways, the calcium, the mitogen-activated protein kinase (MAPK) kinase and the nuclear factor NF-kappa-B (NF-kB) pathways, leading to the mobilization of transcription factors that are critical for gene expression and essential for T cell growth and differentiation. The T cell repertoire is generated in the thymus, by V-(D)-J rearrangement. This repertoire is then shaped by intrathymic selection events to generate a peripheral T cell pool of self-MH restricted, non-autoaggressive T cells. Post-thymic interaction of alpha-beta TR with the pMH complexes shapes TR structural and functional avidity. The chain is T cell receptor alpha variable 35 from Homo sapiens (Human).